The sequence spans 308 residues: UPF0026 protein HP_0117 (308 aa).

The Radical SAM core domain maps to 18 to 248 (FGKSLGVDLS…SLPKRSITQA (231 aa)). [4Fe-4S] cluster is bound by residues C33, C37, and C40.

This sequence belongs to the UPF0026 family. [4Fe-4S] cluster is required as a cofactor.

The polypeptide is UPF0026 protein HP_0117 (Helicobacter pylori (strain ATCC 700392 / 26695) (Campylobacter pylori)).